A 257-amino-acid polypeptide reads, in one-letter code: Type III pantothenate kinase (257 aa).

ATP is bound at residue 11 to 18 (DSGNTAIK). Substrate-binding positions include tyrosine 96 and 103-106 (GCDR). The active-site Proton acceptor is the aspartate 105. Aspartate 125 provides a ligand contact to K(+). Threonine 128 lines the ATP pocket. Residue threonine 179 participates in substrate binding.

The protein belongs to the type III pantothenate kinase family. Homodimer. Requires NH4(+) as cofactor. K(+) serves as cofactor.

It is found in the cytoplasm. It carries out the reaction (R)-pantothenate + ATP = (R)-4'-phosphopantothenate + ADP + H(+). It functions in the pathway cofactor biosynthesis; coenzyme A biosynthesis; CoA from (R)-pantothenate: step 1/5. Its function is as follows. Catalyzes the phosphorylation of pantothenate (Pan), the first step in CoA biosynthesis. This is Type III pantothenate kinase from Nitrosomonas eutropha (strain DSM 101675 / C91 / Nm57).